A 167-amino-acid polypeptide reads, in one-letter code: Insertion element IS1 1 protein InsB (167 aa).

It belongs to the transposase 27 family.

Absolutely required for transposition of IS1. The polypeptide is Insertion element IS1 1 protein InsB (insB1) (Escherichia coli (strain K12)).